A 521-amino-acid polypeptide reads, in one-letter code: MHDSPPFKVIIVGAGVTGLTLAHCLVKAGIDYALLDKGVVAPGFGTTITLQPHGCRILHQLGCLDAVLAKCDVMGGASCRDPNGKIFTSNDFFGVVRKFAGYDTRTLDRQVFLHELYELLPDKSKVYEKARVEEIIEENSTTRVILADGREFAGDLVVGADGVHSKVREIMWDKANAAHPGMITVEEKRAMVTQYNAIVMASSPVPGISAHDMEVTSNDNYSFLLLCQPDWISIIVHSKLPDDQQCTWPTRRRYTETDMEELVSKIIERPVTGSVVFGELWKRRLKAQMISLEEGVLSHWTFGRIALAGDAVHKVTPNSALGGNTAMEDAVVIANTLHALLAMHPNKKPSDVEVRDAMREKYQNTRVDRARAIVKAGGDLTRQQAYDGWKAYIKQRWLTPIIGLDTLAQKIAGLCVTAPKLAYVDFDERRGILGWQDTLAAEKERESKTQVKVPIKQKKGLSWSTWNGGFEAIVPQILVLWAGLWLAICFFHLVFSGNHVPGFGSEVARFFTVYNETWMHS.

The first 22 residues, 1 to 22, serve as a signal peptide directing secretion; sequence MHDSPPFKVIIVGAGVTGLTLA. 2 residues coordinate FAD: aspartate 36 and arginine 109. 2 N-linked (GlcNAc...) asparagine glycosylation sites follow: asparagine 139 and asparagine 220. Positions 310 and 323 each coordinate FAD. The chain crosses the membrane as a helical span at residues 477–497; sequence ILVLWAGLWLAICFFHLVFSG. Asparagine 515 carries an N-linked (GlcNAc...) asparagine glycan.

It belongs to the paxM FAD-dependent monooxygenase family. It depends on FAD as a cofactor.

It localises to the membrane. It functions in the pathway polyketide biosynthesis. Its function is as follows. Part of the gene cluster that mediates the biosynthesis of depudecin, a highly oxidized eleven-carbon linear polyketide that acts as a histone deacetylase (HDAC) inhibitor and makes a small contribution to pathogenesis. The reducing polyketide synthase DEP5 is the central enzyme in depudecin biosynthesis by yielding the backbone polyketide chain. The monooxygenases DEP2 and DEP4, as well as the uncharacterized protein DEP1, then act as tailoring enzymes to modify the intermediate polyketide chain into depudecin. In Fusarium langsethiae, this protein is FAD-dependent monooxygenase DEP2.